The primary structure comprises 275 residues: 2-dehydro-3-deoxyphosphooctonate aldolase (275 aa).

It belongs to the KdsA family.

Its subcellular location is the cytoplasm. It carries out the reaction D-arabinose 5-phosphate + phosphoenolpyruvate + H2O = 3-deoxy-alpha-D-manno-2-octulosonate-8-phosphate + phosphate. The protein operates within carbohydrate biosynthesis; 3-deoxy-D-manno-octulosonate biosynthesis; 3-deoxy-D-manno-octulosonate from D-ribulose 5-phosphate: step 2/3. Its pathway is bacterial outer membrane biogenesis; lipopolysaccharide biosynthesis. The sequence is that of 2-dehydro-3-deoxyphosphooctonate aldolase from Francisella tularensis subsp. novicida (strain U112).